The sequence spans 201 residues: MNSIKHSTEIPSTSTQSLVFEFTNLDDLYGFLNILQCREEYSFAQIRAFYNIPVDKKLLVNIQVKNPAQNLDYAWERRLKHHFRYMLDLEKLMWNLSTLGGAYSAMGDFDANYAKVAAKITAHQINLAKKYGDPVILARCYLYTALAEAQLGNLSHAVNIVRAIYHWAKQNPNTDIVQRCCEGVYQKLRAIHIFGKASSNK.

This is an uncharacterized protein from Caenorhabditis elegans.